A 2285-amino-acid polypeptide reads, in one-letter code: Protein Ycf2 (2285 aa).

Residue 1638 to 1645 (GSIGTGRS) coordinates ATP.

Belongs to the Ycf2 family.

It is found in the plastid. Its subcellular location is the chloroplast stroma. In terms of biological role, probable ATPase of unknown function. Its presence in a non-photosynthetic plant (Epifagus virginiana) and experiments in tobacco indicate that it has an essential function which is probably not related to photosynthesis. This is Protein Ycf2 from Populus trichocarpa (Western balsam poplar).